We begin with the raw amino-acid sequence, 40 residues long: Photosystem II reaction center protein J (40 aa).

Residues 8 to 28 traverse the membrane as a helical segment; that stretch reads IPLWIIGTVTGLLVIGLIGIF.

Belongs to the PsbJ family. As to quaternary structure, PSII is composed of 1 copy each of membrane proteins PsbA, PsbB, PsbC, PsbD, PsbE, PsbF, PsbH, PsbI, PsbJ, PsbK, PsbL, PsbM, PsbT, PsbX, PsbY, PsbZ, Psb30/Ycf12, at least 3 peripheral proteins of the oxygen-evolving complex and a large number of cofactors. It forms dimeric complexes.

Its subcellular location is the plastid. The protein localises to the chloroplast thylakoid membrane. Its function is as follows. One of the components of the core complex of photosystem II (PSII). PSII is a light-driven water:plastoquinone oxidoreductase that uses light energy to abstract electrons from H(2)O, generating O(2) and a proton gradient subsequently used for ATP formation. It consists of a core antenna complex that captures photons, and an electron transfer chain that converts photonic excitation into a charge separation. The sequence is that of Photosystem II reaction center protein J from Ipomoea purpurea (Common morning glory).